The chain runs to 253 residues: Coenzyme F420:L-glutamate ligase (253 aa).

GTP-binding positions include 9–12 (LPEI), 38–39 (ST), and Lys43. Asp113 provides a ligand contact to a divalent metal cation. Position 116 (Asn116) interacts with GTP. Residues Asp150, Thr151, and Glu208 each contribute to the a divalent metal cation site. 206–213 (SGEGDDGT) contributes to the GTP binding site.

It belongs to the CofE family. Homodimer. Requires Mg(2+) as cofactor. Mn(2+) is required as a cofactor. The cofactor is K(+).

It catalyses the reaction oxidized coenzyme F420-0 + GTP + L-glutamate = oxidized coenzyme F420-1 + GDP + phosphate + H(+). The catalysed reaction is oxidized coenzyme F420-1 + GTP + L-glutamate = oxidized coenzyme F420-2 + GDP + phosphate + H(+). The protein operates within cofactor biosynthesis; coenzyme F420 biosynthesis. Its function is as follows. Catalyzes the GTP-dependent successive addition of two or more gamma-linked L-glutamates to the L-lactyl phosphodiester of 7,8-didemethyl-8-hydroxy-5-deazariboflavin (F420-0) to form coenzyme F420-0-glutamyl-glutamate (F420-2) or polyglutamated F420 derivatives. The chain is Coenzyme F420:L-glutamate ligase from Halobacterium salinarum (strain ATCC 29341 / DSM 671 / R1).